A 172-amino-acid chain; its full sequence is RNA silencing suppressor p19 (172 aa).

Residues 1–20 (MERAIQGNDTREQANGERWD) are compositionally biased toward basic and acidic residues. Positions 1–27 (MERAIQGNDTREQANGERWDGGSGGIT) are disordered.

Belongs to the tombusvirus protein p19 family. Homodimer.

In terms of biological role, acts as a suppressor of RNA-mediated gene silencing, also known as post-transcriptional gene silencing (PTGS), a mechanism of plant viral defense that limits the accumulation of viral RNAs. Binds to short interfering RNAs (siRNAs) with high affinity. Acts as a molecular caliper to specifically select siRNAs based on the length of the duplex region of the RNA. This Dianthus caryophyllus (Carnation) protein is RNA silencing suppressor p19.